The primary structure comprises 430 residues: Enolase (430 aa).

Position 163 (Q163) interacts with (2R)-2-phosphoglycerate. E205 serves as the catalytic Proton donor. 3 residues coordinate Mg(2+): D242, E287, and D314. (2R)-2-phosphoglycerate is bound by residues K339, R368, S369, and K390. The Proton acceptor role is filled by K339.

It belongs to the enolase family. Mg(2+) is required as a cofactor.

Its subcellular location is the cytoplasm. The protein resides in the secreted. The protein localises to the cell surface. The catalysed reaction is (2R)-2-phosphoglycerate = phosphoenolpyruvate + H2O. The protein operates within carbohydrate degradation; glycolysis; pyruvate from D-glyceraldehyde 3-phosphate: step 4/5. Its function is as follows. Catalyzes the reversible conversion of 2-phosphoglycerate (2-PG) into phosphoenolpyruvate (PEP). It is essential for the degradation of carbohydrates via glycolysis. The polypeptide is Enolase (Listeria innocua serovar 6a (strain ATCC BAA-680 / CLIP 11262)).